A 248-amino-acid chain; its full sequence is tRNA (guanine-N(1)-)-methyltransferase (248 aa).

Residues G113 and 133–138 (IGDYVL) each bind S-adenosyl-L-methionine.

This sequence belongs to the RNA methyltransferase TrmD family. As to quaternary structure, homodimer.

It is found in the cytoplasm. The catalysed reaction is guanosine(37) in tRNA + S-adenosyl-L-methionine = N(1)-methylguanosine(37) in tRNA + S-adenosyl-L-homocysteine + H(+). Its function is as follows. Specifically methylates guanosine-37 in various tRNAs. The protein is tRNA (guanine-N(1)-)-methyltransferase of Shewanella denitrificans (strain OS217 / ATCC BAA-1090 / DSM 15013).